A 426-amino-acid polypeptide reads, in one-letter code: Serine hydroxymethyltransferase 1 (426 aa).

(6S)-5,6,7,8-tetrahydrofolate-binding positions include leucine 121 and glycine 125–leucine 127. An N6-(pyridoxal phosphate)lysine modification is found at lysine 230. Residue serine 355 to phenylalanine 357 coordinates (6S)-5,6,7,8-tetrahydrofolate.

This sequence belongs to the SHMT family. Homodimer. Pyridoxal 5'-phosphate serves as cofactor.

The protein resides in the cytoplasm. It catalyses the reaction (6R)-5,10-methylene-5,6,7,8-tetrahydrofolate + glycine + H2O = (6S)-5,6,7,8-tetrahydrofolate + L-serine. Its pathway is one-carbon metabolism; tetrahydrofolate interconversion. It participates in amino-acid biosynthesis; glycine biosynthesis; glycine from L-serine: step 1/1. Its function is as follows. Catalyzes the reversible interconversion of serine and glycine with tetrahydrofolate (THF) serving as the one-carbon carrier. This reaction serves as the major source of one-carbon groups required for the biosynthesis of purines, thymidylate, methionine, and other important biomolecules. Also exhibits THF-independent aldolase activity toward beta-hydroxyamino acids, producing glycine and aldehydes, via a retro-aldol mechanism. This is Serine hydroxymethyltransferase 1 from Hahella chejuensis (strain KCTC 2396).